A 222-amino-acid polypeptide reads, in one-letter code: LHFPL tetraspan subfamily member 3 protein (222 aa).

4 helical membrane passes run I22 to I42, F96 to F116, I126 to P146, and I177 to G197.

The protein belongs to the LHFP family. Brain-specific.

It is found in the membrane. In Mus musculus (Mouse), this protein is LHFPL tetraspan subfamily member 3 protein.